Consider the following 204-residue polypeptide: Urease accessory protein UreG (204 aa).

Gly-11 to Thr-18 lines the GTP pocket.

The protein belongs to the SIMIBI class G3E GTPase family. UreG subfamily. Homodimer. UreD, UreF and UreG form a complex that acts as a GTP-hydrolysis-dependent molecular chaperone, activating the urease apoprotein by helping to assemble the nickel containing metallocenter of UreC. The UreE protein probably delivers the nickel.

The protein localises to the cytoplasm. Its function is as follows. Facilitates the functional incorporation of the urease nickel metallocenter. This process requires GTP hydrolysis, probably effectuated by UreG. In Staphylococcus aureus (strain bovine RF122 / ET3-1), this protein is Urease accessory protein UreG.